Reading from the N-terminus, the 69-residue chain is NADH dehydrogenase [ubiquinone] 1 beta subcomplex subunit 2 (69 aa).

This sequence belongs to the complex I NDUFB2 subunit family. As to quaternary structure, complex I is composed of at least 49 different subunits.

It is found in the mitochondrion inner membrane. Its function is as follows. Accessory subunit of the mitochondrial membrane respiratory chain NADH dehydrogenase (Complex I), that is believed not to be involved in catalysis. Complex I functions in the transfer of electrons from NADH to the respiratory chain. The immediate electron acceptor for the enzyme is believed to be ubiquinone. This is NADH dehydrogenase [ubiquinone] 1 beta subcomplex subunit 2 from Arabidopsis thaliana (Mouse-ear cress).